A 92-amino-acid chain; its full sequence is DNA-directed RNA polymerase subunit omega (92 aa).

Belongs to the RNA polymerase subunit omega family. In terms of assembly, the RNAP catalytic core consists of 2 alpha, 1 beta, 1 beta' and 1 omega subunit. When a sigma factor is associated with the core the holoenzyme is formed, which can initiate transcription.

It catalyses the reaction RNA(n) + a ribonucleoside 5'-triphosphate = RNA(n+1) + diphosphate. Functionally, promotes RNA polymerase assembly. Latches the N- and C-terminal regions of the beta' subunit thereby facilitating its interaction with the beta and alpha subunits. This Corynebacterium diphtheriae (strain ATCC 700971 / NCTC 13129 / Biotype gravis) protein is DNA-directed RNA polymerase subunit omega.